Here is a 132-residue protein sequence, read N- to C-terminus: Ribosome-binding factor A (132 aa).

The protein belongs to the RbfA family. As to quaternary structure, monomer. Binds 30S ribosomal subunits, but not 50S ribosomal subunits or 70S ribosomes.

It localises to the cytoplasm. In terms of biological role, one of several proteins that assist in the late maturation steps of the functional core of the 30S ribosomal subunit. Associates with free 30S ribosomal subunits (but not with 30S subunits that are part of 70S ribosomes or polysomes). Required for efficient processing of 16S rRNA. May interact with the 5'-terminal helix region of 16S rRNA. The polypeptide is Ribosome-binding factor A (Xanthomonas campestris pv. campestris (strain 8004)).